A 234-amino-acid polypeptide reads, in one-letter code: Orotidine 5'-phosphate decarboxylase (234 aa).

Substrate is bound by residues aspartate 11, lysine 33, 60-69 (DLKFHDIPNT), threonine 120, arginine 181, glutamine 190, glycine 210, and arginine 211. The active-site Proton donor is lysine 62.

The protein belongs to the OMP decarboxylase family. Type 1 subfamily. Homodimer.

It carries out the reaction orotidine 5'-phosphate + H(+) = UMP + CO2. Its pathway is pyrimidine metabolism; UMP biosynthesis via de novo pathway; UMP from orotate: step 2/2. Catalyzes the decarboxylation of orotidine 5'-monophosphate (OMP) to uridine 5'-monophosphate (UMP). The polypeptide is Orotidine 5'-phosphate decarboxylase (Shewanella sediminis (strain HAW-EB3)).